A 103-amino-acid polypeptide reads, in one-letter code: Large ribosomal subunit protein uL24 (103 aa).

It belongs to the universal ribosomal protein uL24 family. As to quaternary structure, part of the 50S ribosomal subunit.

In terms of biological role, one of two assembly initiator proteins, it binds directly to the 5'-end of the 23S rRNA, where it nucleates assembly of the 50S subunit. Its function is as follows. One of the proteins that surrounds the polypeptide exit tunnel on the outside of the subunit. The sequence is that of Large ribosomal subunit protein uL24 from Pediococcus pentosaceus (strain ATCC 25745 / CCUG 21536 / LMG 10740 / 183-1w).